The chain runs to 129 residues: Small ribosomal subunit protein eS8 (129 aa).

Residues 1–29 (MSVWQGRSRRKPTGGLYRPARKKRKYEMG) form a disordered region.

The protein belongs to the eukaryotic ribosomal protein eS8 family. In terms of assembly, part of the 30S ribosomal subunit.

The polypeptide is Small ribosomal subunit protein eS8 (rps8e) (Methanocaldococcus jannaschii (strain ATCC 43067 / DSM 2661 / JAL-1 / JCM 10045 / NBRC 100440) (Methanococcus jannaschii)).